The following is a 30-amino-acid chain: LGPQLNKGCATCSIGAACLVDGPIPDEIAG.

It localises to the secreted. Bacteriocin that inhibits the growth of several Gram-positive bacteria, especially the food-borne pathogens L.monocytogenes, B.cereus strain ATCC 11778, B.cereus strain ATCC 21366, B.cereus strain ATCC 10876 and B.cereus strain ATCC 14579. Likely to act by disrupting the pathogen membrane resulting in leakage of intracellular constituents. Does not inhibit the growth of Gram-negative bacteria. The chain is Mejucin from Bacillus subtilis.